The chain runs to 274 residues: Nitrogenase iron protein (274 aa).

ATP is bound at residue 8–15; the sequence is GKGGIGKS. A [4Fe-4S] cluster-binding site is contributed by Cys-94. Arg-97 bears the ADP-ribosylarginine; by dinitrogenase reductase ADP-ribosyltransferase mark. Cys-131 lines the [4Fe-4S] cluster pocket.

The protein belongs to the NifH/BchL/ChlL family. As to quaternary structure, homodimer. [4Fe-4S] cluster is required as a cofactor. Post-translationally, the reversible ADP-ribosylation of Arg-97 inactivates the nitrogenase reductase and regulates nitrogenase activity.

It carries out the reaction N2 + 8 reduced [2Fe-2S]-[ferredoxin] + 16 ATP + 16 H2O = H2 + 8 oxidized [2Fe-2S]-[ferredoxin] + 2 NH4(+) + 16 ADP + 16 phosphate + 6 H(+). In terms of biological role, the key enzymatic reactions in nitrogen fixation are catalyzed by the nitrogenase complex, which has 2 components: the iron protein and the molybdenum-iron protein. The sequence is that of Nitrogenase iron protein from Chlorobium limicola (strain DSM 245 / NBRC 103803 / 6330).